Reading from the N-terminus, the 342-residue chain is Cytoplasmic tRNA 2-thiolation protein 1 (342 aa).

The protein belongs to the TtcA family. CTU1/NCS6/ATPBD3 subfamily.

The protein resides in the cytoplasm. It functions in the pathway tRNA modification; 5-methoxycarbonylmethyl-2-thiouridine-tRNA biosynthesis. Functionally, plays a central role in 2-thiolation of mcm(5)S(2)U at tRNA wobble positions of tRNA(Lys), tRNA(Glu) and tRNA(Gln). Directly binds tRNAs and probably acts by catalyzing adenylation of tRNAs, an intermediate required for 2-thiolation. It is unclear whether it acts as a sulfurtransferase that transfers sulfur from thiocarboxylated URM1 onto the uridine of tRNAs at wobble position. This chain is Cytoplasmic tRNA 2-thiolation protein 1, found in Anopheles gambiae (African malaria mosquito).